The primary structure comprises 270 residues: Thiamine thiazole synthase (270 aa).

NAD(+) contacts are provided by residues Ala39, 58 to 59 (EQ), Gly66, and Leu130. Cys159 bears the 2,3-didehydroalanine (Cys) mark. Asp161 provides a ligand contact to NAD(+). Fe cation contacts are provided by Asp161 and His176. Ile223 contributes to the NAD(+) binding site. Arg233 contacts glycine.

It belongs to the THI4 family. Homooctamer; tetramer of dimers. The cofactor is Fe(2+). During the catalytic reaction, a sulfide is transferred from Cys-159 to a reaction intermediate, generating a dehydroalanine residue.

It catalyses the reaction [ADP-thiazole synthase]-L-cysteine + glycine + NAD(+) = [ADP-thiazole synthase]-dehydroalanine + ADP-5-ethyl-4-methylthiazole-2-carboxylate + nicotinamide + 3 H2O + 2 H(+). The protein operates within cofactor biosynthesis; thiamine diphosphate biosynthesis. Involved in biosynthesis of the thiamine precursor thiazole. Catalyzes the conversion of NAD and glycine to adenosine diphosphate 5-(2-hydroxyethyl)-4-methylthiazole-2-carboxylic acid (ADT), an adenylated thiazole intermediate. The reaction includes an iron-dependent sulfide transfer from a conserved cysteine residue of the protein to a thiazole intermediate. The enzyme can only undergo a single turnover, which suggests it is a suicide enzyme. The sequence is that of Thiamine thiazole synthase from Aeropyrum pernix (strain ATCC 700893 / DSM 11879 / JCM 9820 / NBRC 100138 / K1).